The sequence spans 901 residues: Protein translocase subunit SecA (901 aa).

Residues Gln87, 105 to 109 (GEGKT), and Asp512 each bind ATP. 4 residues coordinate Zn(2+): Cys885, Cys887, Cys896, and His897.

The protein belongs to the SecA family. As to quaternary structure, monomer and homodimer. Part of the essential Sec protein translocation apparatus which comprises SecA, SecYEG and auxiliary proteins SecDF-YajC and YidC. Zn(2+) is required as a cofactor.

It is found in the cell inner membrane. Its subcellular location is the cytoplasm. It carries out the reaction ATP + H2O + cellular proteinSide 1 = ADP + phosphate + cellular proteinSide 2.. Functionally, part of the Sec protein translocase complex. Interacts with the SecYEG preprotein conducting channel. Has a central role in coupling the hydrolysis of ATP to the transfer of proteins into and across the cell membrane, serving both as a receptor for the preprotein-SecB complex and as an ATP-driven molecular motor driving the stepwise translocation of polypeptide chains across the membrane. This Salmonella schwarzengrund (strain CVM19633) protein is Protein translocase subunit SecA.